The following is a 97-amino-acid chain: Cytochrome c oxidase subunit 4 isoform 1, mitochondrial (97 aa).

The N-terminal 22 residues, 1-22 (MLATRVFNLIGRRAISTSVCVR), are a transit peptide targeting the mitochondrion. Residue Lys-29 is modified to N6-acetyllysine; alternate. N6-succinyllysine; alternate is present on Lys-29. N6-acetyllysine is present on Lys-53. Residues Ser-56 and Ser-58 each carry the phosphoserine modification. Lys-60 is subject to N6-acetyllysine; alternate. The residue at position 60 (Lys-60) is an N6-succinyllysine; alternate. Lys-67 bears the N6-acetyllysine mark.

It belongs to the cytochrome c oxidase IV family. As to quaternary structure, component of the cytochrome c oxidase (complex IV, CIV), a multisubunit enzyme composed of 14 subunits. The complex is composed of a catalytic core of 3 subunits MT-CO1, MT-CO2 and MT-CO3, encoded in the mitochondrial DNA, and 11 supernumerary subunits COX4I, COX5A, COX5B, COX6A, COX6B, COX6C, COX7A, COX7B, COX7C, COX8 and NDUFA4, which are encoded in the nuclear genome. The complex exists as a monomer or a dimer and forms supercomplexes (SCs) in the inner mitochondrial membrane with NADH-ubiquinone oxidoreductase (complex I, CI) and ubiquinol-cytochrome c oxidoreductase (cytochrome b-c1 complex, complex III, CIII), resulting in different assemblies (supercomplex SCI(1)III(2)IV(1) and megacomplex MCI(2)III(2)IV(2)). Interacts with PHB2; the interaction decreases in absence of SPHK2. Interacts with AFG1L. Interacts with ABCB7; this interaction allows the regulation of cellular iron homeostasis and cellular reactive oxygen species (ROS) levels in cardiomyocytes. Interacts with FLVCR2; this interaction occurs in the absence of heme and is disrupted upon heme binding. Interacts with IRGC.

The protein resides in the mitochondrion inner membrane. The protein operates within energy metabolism; oxidative phosphorylation. Its function is as follows. Component of the cytochrome c oxidase, the last enzyme in the mitochondrial electron transport chain which drives oxidative phosphorylation. The respiratory chain contains 3 multisubunit complexes succinate dehydrogenase (complex II, CII), ubiquinol-cytochrome c oxidoreductase (cytochrome b-c1 complex, complex III, CIII) and cytochrome c oxidase (complex IV, CIV), that cooperate to transfer electrons derived from NADH and succinate to molecular oxygen, creating an electrochemical gradient over the inner membrane that drives transmembrane transport and the ATP synthase. Cytochrome c oxidase is the component of the respiratory chain that catalyzes the reduction of oxygen to water. Electrons originating from reduced cytochrome c in the intermembrane space (IMS) are transferred via the dinuclear copper A center (CU(A)) of subunit 2 and heme A of subunit 1 to the active site in subunit 1, a binuclear center (BNC) formed by heme A3 and copper B (CU(B)). The BNC reduces molecular oxygen to 2 water molecules using 4 electrons from cytochrome c in the IMS and 4 protons from the mitochondrial matrix. This chain is Cytochrome c oxidase subunit 4 isoform 1, mitochondrial (COX4I1), found in Sus scrofa (Pig).